Reading from the N-terminus, the 215-residue chain is Probable phosphoglycerate mutase GpmB (215 aa).

Residues Arg8–Asn15, Gln21–Gly22, Arg58, Arg60, Glu82–Met85, Arg104–Arg105, and Gly151–Ile152 each bind substrate. The active-site Tele-phosphohistidine intermediate is the His9. The active-site Proton donor/acceptor is the Glu82.

It belongs to the phosphoglycerate mutase family. GpmB subfamily.

It catalyses the reaction (2R)-2-phosphoglycerate = (2R)-3-phosphoglycerate. It functions in the pathway carbohydrate degradation; glycolysis; pyruvate from D-glyceraldehyde 3-phosphate: step 3/5. This chain is Probable phosphoglycerate mutase GpmB, found in Citrobacter koseri (strain ATCC BAA-895 / CDC 4225-83 / SGSC4696).